An 867-amino-acid chain; its full sequence is Alanine--tRNA ligase (867 aa).

His-554, His-558, Cys-656, and His-660 together coordinate Zn(2+).

The protein belongs to the class-II aminoacyl-tRNA synthetase family. Zn(2+) serves as cofactor.

It localises to the cytoplasm. The enzyme catalyses tRNA(Ala) + L-alanine + ATP = L-alanyl-tRNA(Ala) + AMP + diphosphate. In terms of biological role, catalyzes the attachment of alanine to tRNA(Ala) in a two-step reaction: alanine is first activated by ATP to form Ala-AMP and then transferred to the acceptor end of tRNA(Ala). Also edits incorrectly charged Ser-tRNA(Ala) and Gly-tRNA(Ala) via its editing domain. The polypeptide is Alanine--tRNA ligase (Methylococcus capsulatus (strain ATCC 33009 / NCIMB 11132 / Bath)).